The sequence spans 250 residues: MRIALTNDDGIQAPGLRAIYKALIEAGHTVDVVAPVTEQSAVGHAVTIAMPLRVKVFHENGFRGHGVYGTPTDCMKLGLSSLLEHKPELVVSGINAGANVGPDILYSGTVSAATEAAHMGYRAVALSYDSFRPEDISAHARHAAALLPHIEWAGLPERCVVNINYPAVPVESIKGVRVCPQTRAVWHDWYEHRTDPRGGSYWWLNGVIPPETVAPGTDRALLTEGYITVTPLRFDFTDSETLTRLASLEE.

Aspartate 8, aspartate 9, serine 40, and asparagine 95 together coordinate a divalent metal cation.

Belongs to the SurE nucleotidase family. Requires a divalent metal cation as cofactor.

It is found in the cytoplasm. It carries out the reaction a ribonucleoside 5'-phosphate + H2O = a ribonucleoside + phosphate. Its function is as follows. Nucleotidase that shows phosphatase activity on nucleoside 5'-monophosphates. The protein is 5'-nucleotidase SurE of Nitratidesulfovibrio vulgaris (strain ATCC 29579 / DSM 644 / CCUG 34227 / NCIMB 8303 / VKM B-1760 / Hildenborough) (Desulfovibrio vulgaris).